Reading from the N-terminus, the 240-residue chain is Serine protease SplB (240 aa).

The signal sequence occupies residues 1–36; sequence MNKNVVIKSLAALTILTSVTGIGTTLVEEVQQTAKA. Catalysis depends on charge relay system residues His-75, Asp-113, and Ser-193.

The protein belongs to the peptidase S1B family.

The protein localises to the secreted. Functionally, serine protease that cleaves specifically after the sequence Trp-Glu-Leu-Gln. In Staphylococcus aureus (strain USA300), this protein is Serine protease SplB (splB).